Consider the following 224-residue polypeptide: Transcription factor HEC3 (224 aa).

Disordered regions lie at residues 22–42 (SSNNNNKNDDHHHQHNNDPIG) and 68–88 (SLTTTTLLSGDQEDDEDEEEP). The segment covering 28–37 (KNDDHHHQHN) has biased composition (basic and acidic residues). The segment covering 68–77 (SLTTTTLLSG) has biased composition (low complexity). Residues 78–88 (DQEDDEDEEEP) are compositionally biased toward acidic residues. Residues 125–174 (ISDDPQSVAARHRRERISERIRILQRLVPGGTKMDTASMLDEAIRYVKFL) form the bHLH domain. The disordered stretch occupies residues 183-224 (NNTGYTPPPPQDQASQAVTTSWVSPPPPPSFGRGGRGVGELI). Positions 194–204 (DQASQAVTTSW) are enriched in polar residues. Residues 214–224 (GRGGRGVGELI) show a composition bias toward gly residues.

In terms of assembly, homodimer. Interacts with SPT. Gynoecium.

The protein localises to the nucleus. Its function is as follows. Required for the female reproductive tract development and fertility. This chain is Transcription factor HEC3 (HEC3), found in Arabidopsis thaliana (Mouse-ear cress).